We begin with the raw amino-acid sequence, 492 residues long: Glutamyl-tRNA(Gln) amidotransferase subunit A (492 aa).

Residues lysine 78 and serine 158 each act as charge relay system in the active site. The active-site Acyl-ester intermediate is serine 182.

The protein belongs to the amidase family. GatA subfamily. As to quaternary structure, heterotrimer of A, B and C subunits.

The catalysed reaction is L-glutamyl-tRNA(Gln) + L-glutamine + ATP + H2O = L-glutaminyl-tRNA(Gln) + L-glutamate + ADP + phosphate + H(+). Allows the formation of correctly charged Gln-tRNA(Gln) through the transamidation of misacylated Glu-tRNA(Gln) in organisms which lack glutaminyl-tRNA synthetase. The reaction takes place in the presence of glutamine and ATP through an activated gamma-phospho-Glu-tRNA(Gln). The chain is Glutamyl-tRNA(Gln) amidotransferase subunit A from Rhodopseudomonas palustris (strain BisB5).